The sequence spans 1060 residues: MPKRTDIRKILVIGSGPIVIGQAAEFDYSGTQACLALKEEGYQVVLINSNPATIMTDKTVADTVYIEPITLDFVTQILRKELPDAILPTLGGQTGLNMALELANCGILAELNIELLGTKLSAIDQAEDRELFKNLMNQLNEPIPESAIAHSLDDAQEFVKQNGFPVIIRPAFTLGGTGGGIAENAGQLKTIVKNGIALSPVGQVLVEQSIAGYKEIEFEVMRDRNDNALVVCNMENFDPVGIHTGDSIVFAPVQTLSDREVQMLRDASLKIIRALKIEGGCNVQLALDPNSERYFIIEVNPRVSRSSALASKATGYPIAKMAAKIAVGLTLDEIYNPITGTTYAQFEPMLDYVVAKIPRWPFDKFNKGDRQLGTQMKATGEVMAIGRNIEESLLKAVRSLEIGTAHLELDGLTSVSDNDLVQRIIHPQDDRLFYLAEALRRGYLIQELAELTKIDLFFLDKISHIVELEEQLRSEKGDVELLEIVKKNGFSDEKIAKTWQITPIQVRQMRQESGIQPVYKMVDTCAAEFESQTPYYYTTYEQENESLVSAKPSILVIGSGPIRIGQGVEFDYATVHCVQAIQKAGYEAIIMNSNPETVSTDFSISDKLYFEPLTLEDVLNVVELEKPEGVIVQFGGQTAINLAAPLEENGVKILGTSVANLDRAEDRDLFDQLIQELNIPQPVGKTATNAPDALTIATEIGYPVLIRPSFVLGGRAMEIVHTPEDLTHYMQEAVKVSDEHPVLIDRYLMGKECEVDAICDGQEVLIPGIMEHIERAGVHSGDSMAVYPPQNLTEDQKAAIIDYTTKLCLALDCHGLLNIQFIIQNDEVYVIEVNPRASRTVPFLSKVTQIPMAQLATQLILGSTLAELKSPTGLLPAGPLIHVKAPVFSFSKLTRVDSLLGPEMKSTGEVMGTDVTMQKALYKAFEASGMHLPSHGNVLMTVTNQDKAQALALAERFREVGYQIIATPGTTQQFKAAGIPVQQVDKINATSGDLLDKIKAGHIQLVINTTGLNEAPQVAKDSIVIRQTAIEHGIPLLTSLDTTDAILTVLESQSLLTKPL.

Residues 1-401 form a carboxyphosphate synthetic domain region; the sequence is MPKRTDIRKI…SLLKAVRSLE (401 aa). ATP contacts are provided by arginine 129, arginine 169, glycine 175, glycine 176, glutamine 208, isoleucine 210, glutamate 215, glycine 241, isoleucine 242, histidine 243, glutamine 284, and glutamate 298. In terms of domain architecture, ATP-grasp 1 spans 133 to 327; it reads KNLMNQLNEP…IAKMAAKIAV (195 aa). Mg(2+)-binding residues include glutamine 284, glutamate 298, and asparagine 300. Residues glutamine 284, glutamate 298, and asparagine 300 each contribute to the Mn(2+) site. The interval 402–546 is oligomerization domain; that stretch reads IGTAHLELDG…YTTYEQENES (145 aa). The carbamoyl phosphate synthetic domain stretch occupies residues 547–929; the sequence is LVSAKPSILV…ALYKAFEASG (383 aa). Residues 671–861 enclose the ATP-grasp 2 domain; that stretch reads DQLIQELNIP…MAQLATQLIL (191 aa). Arginine 707, arginine 746, leucine 748, glutamate 752, glycine 777, valine 778, histidine 779, serine 780, glutamine 820, and glutamate 832 together coordinate ATP. Residues glutamine 820, glutamate 832, and asparagine 834 each contribute to the Mg(2+) site. Residues glutamine 820, glutamate 832, and asparagine 834 each contribute to the Mn(2+) site. The 131-residue stretch at 930–1060 folds into the MGS-like domain; sequence MHLPSHGNVL…ESQSLLTKPL (131 aa). The interval 930 to 1060 is allosteric domain; it reads MHLPSHGNVL…ESQSLLTKPL (131 aa).

It belongs to the CarB family. Composed of two chains; the small (or glutamine) chain promotes the hydrolysis of glutamine to ammonia, which is used by the large (or ammonia) chain to synthesize carbamoyl phosphate. Tetramer of heterodimers (alpha,beta)4. The cofactor is Mg(2+). Mn(2+) is required as a cofactor.

It carries out the reaction hydrogencarbonate + L-glutamine + 2 ATP + H2O = carbamoyl phosphate + L-glutamate + 2 ADP + phosphate + 2 H(+). The catalysed reaction is hydrogencarbonate + NH4(+) + 2 ATP = carbamoyl phosphate + 2 ADP + phosphate + 2 H(+). Its pathway is amino-acid biosynthesis; L-arginine biosynthesis; carbamoyl phosphate from bicarbonate: step 1/1. The protein operates within pyrimidine metabolism; UMP biosynthesis via de novo pathway; (S)-dihydroorotate from bicarbonate: step 1/3. In terms of biological role, large subunit of the glutamine-dependent carbamoyl phosphate synthetase (CPSase). CPSase catalyzes the formation of carbamoyl phosphate from the ammonia moiety of glutamine, carbonate, and phosphate donated by ATP, constituting the first step of 2 biosynthetic pathways, one leading to arginine and/or urea and the other to pyrimidine nucleotides. The large subunit (synthetase) binds the substrates ammonia (free or transferred from glutamine from the small subunit), hydrogencarbonate and ATP and carries out an ATP-coupled ligase reaction, activating hydrogencarbonate by forming carboxy phosphate which reacts with ammonia to form carbamoyl phosphate. The polypeptide is Carbamoyl phosphate synthase large chain (Latilactobacillus sakei subsp. sakei (strain 23K) (Lactobacillus sakei subsp. sakei)).